Reading from the N-terminus, the 605-residue chain is Alpha-1,3-galactosidase A (605 aa).

The N-terminal stretch at 1–20 (MKKYLHILPACFLFYAAAHA) is a signal peptide. PbH1 repeat units lie at residues 256 to 278 (SKNI…VSQY), 312 to 334 (KGKV…NVHG), 421 to 443 (TPEV…LVTT), 444 to 466 (PRKV…LIEA), 477 to 507 (VKDV…HPSN), and 517 to 547 (HQNI…LFRN).

This sequence belongs to the glycosyl hydrolase 110 family. A subfamily.

The enzyme catalyses Hydrolysis of terminal, non-reducing branched (1-&gt;3)-alpha-D-galactosidic residues, producing free D-galactose.. It carries out the reaction Hydrolysis of terminal, non-reducing alpha-D-galactose residues in alpha-D-galactosides, including galactose oligosaccharides, galactomannans and galactolipids.. Functionally, alpha-galactosidase that specifically removes branched alpha-1,3-linked galactose residues present in blood group B antigens. Has no activity toward linear alpha-1,3-linked galactose residues. The sequence is that of Alpha-1,3-galactosidase A (glaA) from Bacteroides fragilis (strain YCH46).